Here is a 133-residue protein sequence, read N- to C-terminus: Holo-[acyl-carrier-protein] synthase (133 aa).

Residues Asp8 and Glu57 each coordinate Mg(2+).

It belongs to the P-Pant transferase superfamily. AcpS family. The cofactor is Mg(2+).

The protein localises to the cytoplasm. The enzyme catalyses apo-[ACP] + CoA = holo-[ACP] + adenosine 3',5'-bisphosphate + H(+). Transfers the 4'-phosphopantetheine moiety from coenzyme A to a Ser of acyl-carrier-protein. The chain is Holo-[acyl-carrier-protein] synthase from Bartonella henselae (strain ATCC 49882 / DSM 28221 / CCUG 30454 / Houston 1) (Rochalimaea henselae).